Here is a 254-residue protein sequence, read N- to C-terminus: L-rhamnose 1-dehydrogenase (NADP(+)) (254 aa).

G13, S15, R16, I18, D64, and N91 together coordinate NADP(+). Residue S144 is the Proton donor of the active site. Residues S144, S146, Q154, and Y157 each coordinate beta-L-rhamnose. NADP(+)-binding residues include Y157 and K161. The Proton acceptor role is filled by Y157. K161 acts as the Lowers pKa of active site Tyr in catalysis. T189 contacts beta-L-rhamnose. Position 190 (I190) interacts with NADP(+). N195 is a binding site for beta-L-rhamnose.

This sequence belongs to the short-chain dehydrogenases/reductases (SDR) family.

The enzyme catalyses L-rhamnofuranose + NADP(+) = L-rhamnono-1,4-lactone + NADPH + H(+). Its pathway is carbohydrate degradation; L-rhamnose degradation. Involved in the non-phosphorylated metabolic pathway of L-rhamnose catabolism. Catalyzes the oxidation of L-rhamnose to yield L-rhamnono-1,4-lactone. It can also oxidize L-lyxose and L-mannose, and uses only NADP. In Thermoplasma acidophilum (strain ATCC 25905 / DSM 1728 / JCM 9062 / NBRC 15155 / AMRC-C165), this protein is L-rhamnose 1-dehydrogenase (NADP(+)).